The following is a 1029-amino-acid chain: Multiple C2 domain and transmembrane region protein 6 (1029 aa).

Residues 1–111 form the C2 1 domain; it reads MNKLVVEIVD…SGVQRYPLDK (111 aa). Positions 187–224 are disordered; it reads TKKKEKESRTFHSIGAHAGGGGGAPPMSQAKQAYPPPP. C2 domains are found at residues 277 to 398, 437 to 562, and 605 to 727; these read RSSG…PQWY, RVSH…PRWF, and FSSD…THFY. 5 residues coordinate Ca(2+): aspartate 310, aspartate 316, aspartate 363, aspartate 365, and aspartate 371. A run of 2 helical transmembrane segments spans residues 864–884 and 976–996; these read LILV…LFVI and FALI…AIII.

The protein belongs to the MCTP family. Ca(2+) serves as cofactor. As to expression, expressed in the vascular tissues of cotyledons and rosette leaves. Accumulates in roots caps and shoot apical meristems (SAMs). Observed in flowers.

The protein localises to the cell membrane. The protein resides in the cytoplasm. It is found in the endosome membrane. Its function is as follows. Regulates flowering time under long days. May function as a signaling molecule by regulating the trafficking of other regulators. This chain is Multiple C2 domain and transmembrane region protein 6, found in Arabidopsis thaliana (Mouse-ear cress).